The primary structure comprises 80 residues: Late expression factor 10 (80 aa).

It belongs to the baculoviridae LEF-10 family.

Functionally, involved in late/very late gene activation. The sequence is that of Late expression factor 10 (LEF-10) from Orgyia pseudotsugata multicapsid polyhedrosis virus (OpMNPV).